The following is a 311-amino-acid chain: Beta-ketoacyl-[acyl-carrier-protein] synthase III (311 aa).

Residues cysteine 114 and histidine 238 contribute to the active site. The ACP-binding stretch occupies residues 239–243; it reads QANIR. Asparagine 268 is a catalytic residue.

It belongs to the thiolase-like superfamily. FabH family. In terms of assembly, homodimer.

The protein resides in the cytoplasm. The enzyme catalyses malonyl-[ACP] + acetyl-CoA + H(+) = 3-oxobutanoyl-[ACP] + CO2 + CoA. The protein operates within lipid metabolism; fatty acid biosynthesis. Catalyzes the condensation reaction of fatty acid synthesis by the addition to an acyl acceptor of two carbons from malonyl-ACP. Catalyzes the first condensation reaction which initiates fatty acid synthesis and may therefore play a role in governing the total rate of fatty acid production. Possesses both acetoacetyl-ACP synthase and acetyl transacylase activities. Its substrate specificity determines the biosynthesis of branched-chain and/or straight-chain of fatty acids. In Neorickettsia sennetsu (strain ATCC VR-367 / Miyayama) (Ehrlichia sennetsu), this protein is Beta-ketoacyl-[acyl-carrier-protein] synthase III.